The chain runs to 577 residues: Arginine--tRNA ligase (577 aa).

The 'HIGH' region motif lies at Pro122–His132.

Belongs to the class-I aminoacyl-tRNA synthetase family. As to quaternary structure, monomer.

The protein resides in the cytoplasm. The catalysed reaction is tRNA(Arg) + L-arginine + ATP = L-arginyl-tRNA(Arg) + AMP + diphosphate. The polypeptide is Arginine--tRNA ligase (Escherichia coli O8 (strain IAI1)).